Consider the following 118-residue polypeptide: Large ribosomal subunit protein bL20 (118 aa).

This sequence belongs to the bacterial ribosomal protein bL20 family.

Its function is as follows. Binds directly to 23S ribosomal RNA and is necessary for the in vitro assembly process of the 50S ribosomal subunit. It is not involved in the protein synthesizing functions of that subunit. The protein is Large ribosomal subunit protein bL20 of Stutzerimonas stutzeri (strain A1501) (Pseudomonas stutzeri).